Consider the following 225-residue polypeptide: Peptidyl-tRNA hydrolase (225 aa).

Y14 contacts tRNA. H19 serves as the catalytic Proton acceptor. TRNA-binding residues include F64, N66, and N112. Residues 184–225 (ALRMQPPKPEKPKPAAKAPEAQAPEAAPDERSALQKLADRFR) are disordered. Residues 198 to 209 (AAKAPEAQAPEA) are compositionally biased toward low complexity. Over residues 211–225 (PDERSALQKLADRFR) the composition is skewed to basic and acidic residues.

It belongs to the PTH family. In terms of assembly, monomer.

It is found in the cytoplasm. The enzyme catalyses an N-acyl-L-alpha-aminoacyl-tRNA + H2O = an N-acyl-L-amino acid + a tRNA + H(+). In terms of biological role, hydrolyzes ribosome-free peptidyl-tRNAs (with 1 or more amino acids incorporated), which drop off the ribosome during protein synthesis, or as a result of ribosome stalling. Functionally, catalyzes the release of premature peptidyl moieties from peptidyl-tRNA molecules trapped in stalled 50S ribosomal subunits, and thus maintains levels of free tRNAs and 50S ribosomes. The sequence is that of Peptidyl-tRNA hydrolase from Cereibacter sphaeroides (strain ATCC 17023 / DSM 158 / JCM 6121 / CCUG 31486 / LMG 2827 / NBRC 12203 / NCIMB 8253 / ATH 2.4.1.) (Rhodobacter sphaeroides).